The following is a 626-amino-acid chain: Chaperone protein HtpG (626 aa).

Residues Met1–Arg331 form an a; substrate-binding region. The segment at Glu332–Arg544 is b. Residues Leu545–Ala626 form a c region.

Belongs to the heat shock protein 90 family. Homodimer.

The protein localises to the cytoplasm. Its function is as follows. Molecular chaperone. Has ATPase activity. The protein is Chaperone protein HtpG of Methylorubrum extorquens (strain PA1) (Methylobacterium extorquens).